Consider the following 146-residue polypeptide: Small ribosomal subunit protein uS13A (146 aa).

N-acetylserine is present on Ser2. Residue Lys36 forms a Glycyl lysine isopeptide (Lys-Gly) (interchain with G-Cter in ubiquitin) linkage. Residue Lys48 is modified to N6-methyllysine; by RKM1. Residues Lys49, Lys80, and Lys96 each participate in a glycyl lysine isopeptide (Lys-Gly) (interchain with G-Cter in ubiquitin) cross-link.

This sequence belongs to the universal ribosomal protein uS13 family. Component of the small ribosomal subunit (SSU). Mature yeast ribosomes consist of a small (40S) and a large (60S) subunit. The 40S small subunit contains 1 molecule of ribosomal RNA (18S rRNA) and 33 different proteins (encoded by 57 genes). The large 60S subunit contains 3 rRNA molecules (25S, 5.8S and 5S rRNA) and 46 different proteins (encoded by 81 genes). In terms of processing, N-terminally acetylated by acetyltransferase NatA.

It localises to the cytoplasm. Functionally, component of the ribosome, a large ribonucleoprotein complex responsible for the synthesis of proteins in the cell. The small ribosomal subunit (SSU) binds messenger RNAs (mRNAs) and translates the encoded message by selecting cognate aminoacyl-transfer RNA (tRNA) molecules. The large subunit (LSU) contains the ribosomal catalytic site termed the peptidyl transferase center (PTC), which catalyzes the formation of peptide bonds, thereby polymerizing the amino acids delivered by tRNAs into a polypeptide chain. The nascent polypeptides leave the ribosome through a tunnel in the LSU and interact with protein factors that function in enzymatic processing, targeting, and the membrane insertion of nascent chains at the exit of the ribosomal tunnel. This Saccharomyces cerevisiae (strain ATCC 204508 / S288c) (Baker's yeast) protein is Small ribosomal subunit protein uS13A.